Consider the following 303-residue polypeptide: Methionyl-tRNA formyltransferase (303 aa).

111–114 is a (6S)-5,6,7,8-tetrahydrofolate binding site; the sequence is SLLP.

It belongs to the Fmt family.

The catalysed reaction is L-methionyl-tRNA(fMet) + (6R)-10-formyltetrahydrofolate = N-formyl-L-methionyl-tRNA(fMet) + (6S)-5,6,7,8-tetrahydrofolate + H(+). Attaches a formyl group to the free amino group of methionyl-tRNA(fMet). The formyl group appears to play a dual role in the initiator identity of N-formylmethionyl-tRNA by promoting its recognition by IF2 and preventing the misappropriation of this tRNA by the elongation apparatus. The sequence is that of Methionyl-tRNA formyltransferase from Ehrlichia chaffeensis (strain ATCC CRL-10679 / Arkansas).